The chain runs to 353 residues: uncharacterized protein (353 aa).

The N-terminal stretch at 1–18 (MKFVLFAQLAAVAAPAIA) is a signal peptide. The interval 94 to 119 (EGGNVRRVPGGPSQSARQIGDSSTPM) is disordered. Residues 105–119 (PSQSARQIGDSSTPM) are compositionally biased toward polar residues. Asn165 and Asn312 each carry an N-linked (GlcNAc...) asparagine glycan.

Belongs to the glycosyl hydrolase 3 family.

Its subcellular location is the secreted. This is an uncharacterized protein from Arthroderma benhamiae (strain ATCC MYA-4681 / CBS 112371) (Trichophyton mentagrophytes).